The chain runs to 288 residues: uncharacterized protein (288 aa).

The 59-residue stretch at 1-59 (MDKLNAISIFCKVIETQSFTLAAKQQNISVAMASKLVSQLEEHLKTRLLQRTTRKIMPT) folds into the HTH lysR-type domain. Residues 19 to 38 (FTLAAKQQNISVAMASKLVS) constitute a DNA-binding region (H-T-H motif).

The protein belongs to the LysR transcriptional regulatory family.

This is an uncharacterized protein from Haemophilus influenzae (strain ATCC 51907 / DSM 11121 / KW20 / Rd).